A 131-amino-acid chain; its full sequence is Large ribosomal subunit protein bL17 (131 aa).

Belongs to the bacterial ribosomal protein bL17 family. Part of the 50S ribosomal subunit. Contacts protein L32.

The chain is Large ribosomal subunit protein bL17 from Bordetella petrii (strain ATCC BAA-461 / DSM 12804 / CCUG 43448).